A 1255-amino-acid chain; its full sequence is DNA-directed RNA polymerase subunit beta' (1255 aa).

Zn(2+) is bound by residues Cys-68, Cys-70, Cys-83, and Cys-86. Mg(2+) is bound by residues Asp-457, Asp-459, and Asp-461. Zn(2+) is bound by residues Cys-803, Cys-885, Cys-892, and Cys-895. Residues 1220–1240 are compositionally biased toward acidic residues; it reads NSDEEVSFTEDEYFEDEENDL. The disordered stretch occupies residues 1220 to 1255; sequence NSDEEVSFTEDEYFEDEENDLSTENFDDLKFSEEEE. The segment covering 1246–1255 has biased composition (basic and acidic residues); it reads DDLKFSEEEE.

This sequence belongs to the RNA polymerase beta' chain family. In terms of assembly, the RNAP catalytic core consists of 2 alpha, 1 beta, 1 beta' and 1 omega subunit. When a sigma factor is associated with the core the holoenzyme is formed, which can initiate transcription. Mg(2+) is required as a cofactor. The cofactor is Zn(2+).

It carries out the reaction RNA(n) + a ribonucleoside 5'-triphosphate = RNA(n+1) + diphosphate. DNA-dependent RNA polymerase catalyzes the transcription of DNA into RNA using the four ribonucleoside triphosphates as substrates. The polypeptide is DNA-directed RNA polymerase subunit beta' (Lachnoclostridium phytofermentans (strain ATCC 700394 / DSM 18823 / ISDg) (Clostridium phytofermentans)).